Consider the following 138-residue polypeptide: Small ribosomal subunit protein uS12 (138 aa).

Residues 33–55 (KEHTNVSSPQKRGVCTRVGTMTP) are disordered. A 3-methylthioaspartic acid modification is found at D102.

Belongs to the universal ribosomal protein uS12 family. Part of the 30S ribosomal subunit. Contacts proteins S8 and S17. May interact with IF1 in the 30S initiation complex.

In terms of biological role, with S4 and S5 plays an important role in translational accuracy. Interacts with and stabilizes bases of the 16S rRNA that are involved in tRNA selection in the A site and with the mRNA backbone. Located at the interface of the 30S and 50S subunits, it traverses the body of the 30S subunit contacting proteins on the other side and probably holding the rRNA structure together. The combined cluster of proteins S8, S12 and S17 appears to hold together the shoulder and platform of the 30S subunit. This is Small ribosomal subunit protein uS12 from Bacillus licheniformis (strain ATCC 14580 / DSM 13 / JCM 2505 / CCUG 7422 / NBRC 12200 / NCIMB 9375 / NCTC 10341 / NRRL NRS-1264 / Gibson 46).